Reading from the N-terminus, the 1978-residue chain is Protein MOR1 (1978 aa).

HEAT repeat units follow at residues 48 to 86 (DPRLRDFGHLFRKTVADSNAPVQEKALDALIAFLRAADS) and 165 to 202 (IPPKRILKMLPELFDHQDQNVRASAKGVTLELCRWIGK). Residues 230-264 (AGAKPTRKIRSEQDKEPEAEASSDVVGDGPSEEAV) are disordered. A compositionally biased stretch (basic and acidic residues) spans 238–247 (IRSEQDKEPE). HEAT repeat units follow at residues 322 to 359 (GDFSEICRTLKKLITDVNLAVAVEAIQAIGNLACGLRT), 363 to 400 (ASSRFMLPVLLEKLKEKKQSVTDPLTQTLQTMYKAGCL), and 442 to 479 (KAHKEYVPLCMECLNDGTPDVRDAAFSALAAIAKSVGM). The tract at residues 501–587 (IAGSGGGDQA…SVEPPEDVEP (87 aa)) is disordered. The segment covering 510–527 (AGTSSVTVQSSVGSTATG) has biased composition (low complexity). The span at 565-577 (GKKDGSVRNEGSK) shows a compositional bias: basic and acidic residues. HEAT repeat units lie at residues 849–886 (DISTKITPNLLKGFESPDWKMRLESIEAVNKILEEANK), 890–928 (PTGTGELFGGLRGRLLDSNKNLVMQTLTTIGGVAAAMGP), 932–969 (KASKGILSDVLKCLGDNKKHMRECTLAALDLWLGAVHL), and 1008–1045 (VDAIHLLKPASTAMTDKSADVRKAAEGCISEILRVSGQ). Residues 1087 to 1115 (SKGVTKISKSTSNGTLKQGNRSRAVPTKG) are disordered. A compositionally biased stretch (polar residues) spans 1093 to 1107 (ISKSTSNGTLKQGNR). HEAT repeat units follow at residues 1230–1253 (LKVLEFLPELFNTLRDEEYCMTEA), 1254–1286 (EAAIFLPCLAEKLGHNIEKVREKMRELMKQIIQ), 1287–1325 (AYSVGKTYPYILEGLRSKNNRTRIECTDLIGYLLETCGT), and 1328–1365 (GGLLKYLNIVASLTAERDGELRKAALNTMATGYQILGA). Residues 1393 to 1403 (MEKRREGKPGE) are compositionally biased toward basic and acidic residues. The interval 1393 to 1431 (MEKRREGKPGEARAALRRSVRDSGPEVAEQSGDISQTVP) is disordered. Residues 1535-1575 (RSCKYVLNTLMQTFQNKKLAHAVKEGTLESLITELLLWLLD) form an HEAT 14 repeat. Positions 1837 to 1862 (AAAGRTPSSLPLSTPPPSSLALPSPD) are disordered.

It belongs to the TOG/XMAP215 family. As to expression, expressed in roots, cotyledons, rosette leaves, stems, open flowers and green siliques.

Its subcellular location is the cytoplasm. The protein localises to the cytoskeleton. The protein resides in the phragmoplast. It is found in the spindle. In terms of biological role, microtubule-binding protein that is essential for cortical microtubules organization and function. Essential for maintaining the interphase cortical array and for correct morphogenesis. Promotes rapid growth and shrinkage of microtubules and suppresses the pausing of interphase microtubules. Regulates the structure and function of microtubule arrays during mitosis and cytokinesis. Probably not required for cellulose microfibrils alignment in roots. This chain is Protein MOR1 (MOR1), found in Arabidopsis thaliana (Mouse-ear cress).